Here is a 269-residue protein sequence, read N- to C-terminus: Capsid assembly scaffolding protein (269 aa).

It belongs to the T4likevirus capsid assembly scaffolding protein family.

It localises to the virion. Its function is as follows. Scaffolding protein involved in the icosahedric procapsid assembly. Coassembles with the capsid proteins to form the procapsid, in which the scaffolding protein is found within the external shell of icosahedrally arranged capsid protein subunits. In a subsequent step the scaffolding protein molecules are cleaved by the viral protease and released, except for the internal peptide VII. Cleavage product of Gp22 that is incorporated into the mature phage head. The sequence is that of Capsid assembly scaffolding protein (22) from Enterobacteria phage T4 (Bacteriophage T4).